Consider the following 61-residue polypeptide: Large ribosomal subunit protein bL32 (61 aa).

A compositionally biased stretch (basic residues) spans Met-1–Arg-16. The segment at Met-1–Pro-39 is disordered. Residues Ile-28–Pro-39 show a composition bias toward basic and acidic residues.

Belongs to the bacterial ribosomal protein bL32 family.

The chain is Large ribosomal subunit protein bL32 from Rhizobium meliloti (strain 1021) (Ensifer meliloti).